A 376-amino-acid polypeptide reads, in one-letter code: uncharacterized protein (376 aa).

S59 is subject to Phosphoserine. In terms of domain architecture, Rho-GAP spans 139–367 (VAIEITVQRQ…CLIEHHNAIF (229 aa)). A disordered region spans residues 307 to 338 (RPSRSPKKSNDFETATPWDLLSDEGEGPDASS).

This is an uncharacterized protein from Arabidopsis thaliana (Mouse-ear cress).